A 297-amino-acid chain; its full sequence is Bilin biosynthesis protein MpeU (297 aa).

Belongs to the CpcE/RpcE/PecE family.

Functionally, an enzyme involved in the biosynthesis of bilin. This is Bilin biosynthesis protein MpeU (mpeU) from Synechococcus sp. (strain WH8020).